The primary structure comprises 293 residues: Homoserine kinase (293 aa).

ATP is bound at residue 83 to 93 (RPKSGLGSSGA).

Belongs to the GHMP kinase family. Homoserine kinase subfamily.

Its subcellular location is the cytoplasm. The catalysed reaction is L-homoserine + ATP = O-phospho-L-homoserine + ADP + H(+). The protein operates within amino-acid biosynthesis; L-threonine biosynthesis; L-threonine from L-aspartate: step 4/5. Functionally, catalyzes the ATP-dependent phosphorylation of L-homoserine to L-homoserine phosphate. This is Homoserine kinase from Pyrococcus horikoshii (strain ATCC 700860 / DSM 12428 / JCM 9974 / NBRC 100139 / OT-3).